The following is a 347-amino-acid chain: Homoisocitrate dehydrogenase (347 aa).

Position 68–70 (68–70) interacts with NADH; it reads ITS. Serine 70 lines the (2R,3S)-homoisocitrate pocket. The residue at position 81 (serine 81) is a Phosphoserine. (2R,3S)-homoisocitrate is bound by residues arginine 87, arginine 97, arginine 128, tyrosine 135, lysine 181, and asparagine 183. Asparagine 183 contacts NADH. Mg(2+) is bound by residues aspartate 213, aspartate 237, and aspartate 241. Residues 270-274 and asparagine 282 contribute to the NADH site; that span reads GSAPD.

This sequence belongs to the isocitrate and isopropylmalate dehydrogenases family. The cofactor is Mg(2+).

The enzyme catalyses (2R,3S)-homoisocitrate + NAD(+) = 2-oxoadipate + CO2 + NADH. It carries out the reaction (2R,3S)-iso(homo)2citrate + NAD(+) = 2-oxoheptanedioate + CO2 + NADH. It catalyses the reaction (2R,3S)-iso(homo)3citrate + NAD(+) = 2-oxosuberate + CO2 + NADH. It participates in organic acid metabolism; 2-oxosuberate biosynthesis. Catalyzes the NAD-dependent oxidation and decarboxylation of (2R,3S)-homoisocitrate, (2R,3S)-homo(2)-isocitrate and (2R,3S)-homo(3)-isocitrate, into 2-oxoadipate, 2-oxopimelate (2-oxoheptanedioate), and 2-oxosuberate, respectively. All these substrates are intermediates in the biosynthesis of biotin and of 7-mercaptoheptanoate, a moiety of coenzyme B in methanoarchaea. Is also able to produce 2-oxoazelate from (2R,3S)-homo(4)-isocitrate in vitro, but this substrate is probably not physiologically relevant. Is unable to use any isomer of isocitrate or isopropylmalate as a substrate, and NADP as an oxidant. The chain is Homoisocitrate dehydrogenase (aksF) from Methanocaldococcus jannaschii (strain ATCC 43067 / DSM 2661 / JAL-1 / JCM 10045 / NBRC 100440) (Methanococcus jannaschii).